A 460-amino-acid chain; its full sequence is Chromosomal replication initiator protein DnaA 1 (460 aa).

Residues 1–68 (MRAWEEFLLL…KSGLVNNNNK (68 aa)) are domain I, interacts with DnaA modulators. Residues 68 to 102 (KPIRVHVTSVDKAAPFYKEKQMQQEKTAYFTMHYG) are domain II. The segment at 103 to 321 (SVNPEMTFSN…HALNLLAKRV (219 aa)) is domain III, AAA+ region. The ATP site is built by glycine 151, glycine 153, lysine 154, and threonine 155. Residues 322–460 (MYKKLSHQLL…EFFPSEEMII (139 aa)) form a domain IV, binds dsDNA region.

The protein belongs to the DnaA family. In terms of assembly, oligomerizes as a right-handed, spiral filament on DNA at oriC.

It localises to the cytoplasm. Plays an essential role in the initiation and regulation of chromosomal replication. ATP-DnaA binds to the origin of replication (oriC) to initiate formation of the DNA replication initiation complex once per cell cycle. Binds the DnaA box (a 9 base pair repeat at the origin) and separates the double-stranded (ds)DNA. Forms a right-handed helical filament on oriC DNA; dsDNA binds to the exterior of the filament while single-stranded (ss)DNA is stabiized in the filament's interior. The ATP-DnaA-oriC complex binds and stabilizes one strand of the AT-rich DNA unwinding element (DUE), permitting loading of DNA polymerase. After initiation quickly degrades to an ADP-DnaA complex that is not apt for DNA replication. Binds acidic phospholipids. This is Chromosomal replication initiator protein DnaA 1 from Chlamydia pneumoniae (Chlamydophila pneumoniae).